A 590-amino-acid chain; its full sequence is Glutamine--tRNA ligase (590 aa).

Positions 55 to 65 (PEPNGYLHIGH) match the 'HIGH' region motif. ATP-binding positions include 56 to 58 (EPN) and 62 to 68 (HIGHAKS). Residues Asp93 and Tyr238 each coordinate L-glutamine. ATP-binding positions include Thr257 and 292–293 (RL). The 'KMSKS' region signature appears at 299–303 (ITSKR).

It belongs to the class-I aminoacyl-tRNA synthetase family. In terms of assembly, monomer.

It localises to the cytoplasm. The enzyme catalyses tRNA(Gln) + L-glutamine + ATP = L-glutaminyl-tRNA(Gln) + AMP + diphosphate. This Polynucleobacter necessarius subsp. necessarius (strain STIR1) protein is Glutamine--tRNA ligase.